Reading from the N-terminus, the 297-residue chain is tRNA uridine(34) hydroxylase (297 aa).

The region spanning 137 to 232 is the Rhodanese domain; it reads RGDDVVFFDG…YGEKYGDKGL (96 aa). C192 serves as the catalytic Cysteine persulfide intermediate.

It belongs to the TrhO family.

It catalyses the reaction uridine(34) in tRNA + AH2 + O2 = 5-hydroxyuridine(34) in tRNA + A + H2O. Catalyzes oxygen-dependent 5-hydroxyuridine (ho5U) modification at position 34 in tRNAs. The chain is tRNA uridine(34) hydroxylase from Corynebacterium urealyticum (strain ATCC 43042 / DSM 7109).